The sequence spans 139 residues: Large ribosomal subunit protein uL16 (139 aa).

Residues 1-20 (MLMPRRVKHRKQHHPTRRGA) show a composition bias toward basic residues. Positions 1–24 (MLMPRRVKHRKQHHPTRRGAAKGG) are disordered.

The protein belongs to the universal ribosomal protein uL16 family. In terms of assembly, part of the 50S ribosomal subunit.

Its function is as follows. Binds 23S rRNA and is also seen to make contacts with the A and possibly P site tRNAs. This chain is Large ribosomal subunit protein uL16, found in Nocardioides sp. (strain ATCC BAA-499 / JS614).